We begin with the raw amino-acid sequence, 577 residues long: PTS system lactose-specific EIICB component (577 aa).

The PTS EIIC type-3 domain maps to 4-405 (VFDKLKPVFE…VLDVAIYFPF (402 aa)). 9 helical membrane passes run 27–47 (GFIA…VAYV), 63–83 (LMVA…GTTA), 100–120 (INPV…SILP), 133–153 (QGLI…YVCI), 176–196 (LIPM…FKAA), 219–239 (YLGL…GVQG), 280–300 (VMNF…LFAA), 326–346 (FGMP…TPIV), and 386–406 (LAFV…FPFI). The PTS EIIB type-3 domain maps to 476–577 (EVDVLVLCAG…MALDFVESNL (102 aa)). The active-site Phosphocysteine intermediate; for EIIB activity is the Cys-483. At Cys-483 the chain carries Phosphocysteine; by EIIA.

The protein localises to the cell membrane. The enzyme catalyses lactose(out) + N(pros)-phospho-L-histidyl-[protein] = lactose 6-phosphate(in) + L-histidyl-[protein]. In terms of biological role, the phosphoenolpyruvate-dependent sugar phosphotransferase system (sugar PTS), a major carbohydrate active transport system, catalyzes the phosphorylation of incoming sugar substrates concomitantly with their translocation across the cell membrane. The enzyme II LacEF PTS system is involved in lactose transport. This is PTS system lactose-specific EIICB component from Lacticaseibacillus casei (Lactobacillus casei).